Consider the following 392-residue polypeptide: MSIKTIKDFDFSGKRALVRCDFNVPLREGNITDDTRIRAALPTIEYLKSQGARVVLMSHLGRPKGERNLKYSLMPVAKRLSELLGQDVKMLPDCIGDEVATAVSNMKNGDVVLLENIRFYRQEEENCNDFAKKLSQNGDIFVNDAFGTAHRAHASTAGLAAYLPAVGGFLMEKEDEFLGKILKNPESPFVSIIGGSKVSSKIAVLESLLPKSNVMVIGGGMAYTFLKVEGHSIGKSLLENEYIDVAASFLKKAKELDVKVILPLDHIVASEFKEDSIPEYVDAIDIPDGKIGMDIGEKTLRKIEEVLVSAKTVIWNGPLGVFEFDSFSKGTAKVAEYVASCSGITVVGGGDSVAAVNKFNLSEKITHVSTGGGASLEYLEGKILPGIKVLEK.

Residues 21 to 23, Arg36, 59 to 62, Arg118, and Arg151 contribute to the substrate site; these read DFN and HLGR. Residues Lys201, Gly292, Glu323, and 349–352 each bind ATP; that span reads GGDS.

Belongs to the phosphoglycerate kinase family. In terms of assembly, monomer.

It is found in the cytoplasm. The catalysed reaction is (2R)-3-phosphoglycerate + ATP = (2R)-3-phospho-glyceroyl phosphate + ADP. Its pathway is carbohydrate degradation; glycolysis; pyruvate from D-glyceraldehyde 3-phosphate: step 2/5. The sequence is that of Phosphoglycerate kinase from Borrelia hermsii (strain HS1 / DAH).